The chain runs to 123 residues: Small ribosomal subunit protein uS12 (123 aa).

3-methylthioaspartic acid is present on Asp89.

It belongs to the universal ribosomal protein uS12 family. Part of the 30S ribosomal subunit. Contacts proteins S8 and S17. May interact with IF1 in the 30S initiation complex.

With S4 and S5 plays an important role in translational accuracy. In terms of biological role, interacts with and stabilizes bases of the 16S rRNA that are involved in tRNA selection in the A site and with the mRNA backbone. Located at the interface of the 30S and 50S subunits, it traverses the body of the 30S subunit contacting proteins on the other side and probably holding the rRNA structure together. The combined cluster of proteins S8, S12 and S17 appears to hold together the shoulder and platform of the 30S subunit. The sequence is that of Small ribosomal subunit protein uS12 from Gluconacetobacter diazotrophicus (strain ATCC 49037 / DSM 5601 / CCUG 37298 / CIP 103539 / LMG 7603 / PAl5).